The sequence spans 320 residues: Cytochrome f (320 aa).

An N-terminal signal peptide occupies residues 1–35; that stretch reads MQTRKTFSWIKEQITRSISASLMIYIITRTSISSA. The heme site is built by Tyr-36, Cys-56, Cys-59, and His-60. The helical transmembrane segment at 286–306 threads the bilayer; it reads VQGLLFFLASVILAQIFLVLK.

The protein belongs to the cytochrome f family. The 4 large subunits of the cytochrome b6-f complex are cytochrome b6, subunit IV (17 kDa polypeptide, petD), cytochrome f and the Rieske protein, while the 4 small subunits are PetG, PetL, PetM and PetN. The complex functions as a dimer. The cofactor is heme.

Its subcellular location is the plastid. The protein resides in the chloroplast thylakoid membrane. Component of the cytochrome b6-f complex, which mediates electron transfer between photosystem II (PSII) and photosystem I (PSI), cyclic electron flow around PSI, and state transitions. In Panax ginseng (Korean ginseng), this protein is Cytochrome f.